Consider the following 541-residue polypeptide: MEAQDPLFDLIGLGFGPANLAIAGAIVEKWEGPSAGGDGGISAHKVLFIEKQPEFQWHPGMLLPNTRMQISFLKDLATLRSPQSPLTFLSYLHAEGRLLPFINRGSFTPTRREYFDYLSWAARTVESKGIKVQYGEEVVSIRGSEDNTVEVHSRDVKTGTIVIRRTRNLVISPGGNPKLPPNISLLYPHPRILHSSRYATSVDQLLGTLSPANRPLRIAVIGSGQSAAEVTLDLHSRLSSMPGGDRPHAIDMIFRNGSLKPSDDSPFSNEIFDPDTTEVIYNLPTQSDRENILKEYNNTNYSVVNPRTIDAMYEVMYDQKLDDAIARRKGDKATPSAARITMHPHMTLYFADDLPQLAETDSATETSQEGIRLTLQNVFSQAQSTRDYDAVVCATGYDRTSWLRMLTSSDIGKHFGLNLSSDPVQLVPSTEIPKGPDGSLFDASEEEATWRPASPITPASPSPPSTPTSSALSQSRMLGQLPITKLYITREYCLVPNSPQFKPRIYLQGCTEATHGLSESLLSILGVRAGLVVDDLWKNSQ.

FAD-binding positions include 50-58 and Gln-69; that span reads EKQPEFQWH. Lys-74 provides a ligand contact to substrate. 223–226 lines the NADP(+) pocket; that stretch reads SGQS. Substrate contacts are provided by residues 269 to 272 and Asn-300; that span reads NEIF. 300-302 is an NADP(+) binding site; the sequence is NYS. The tract at residues 430–474 is disordered; it reads TEIPKGPDGSLFDASEEEATWRPASPITPASPSPPSTPTSSALSQ. 520-522 lines the FAD pocket; that stretch reads SLL. A substrate-binding site is contributed by Ser-523.

This sequence belongs to the lysine N(6)-hydroxylase/L-ornithine N(5)-oxygenase family. Homotetramer. It depends on FAD as a cofactor.

It carries out the reaction L-ornithine + NADPH + O2 = N(5)-hydroxy-L-ornithine + NADP(+) + H2O. It catalyses the reaction L-ornithine + NADH + O2 = N(5)-hydroxy-L-ornithine + NAD(+) + H2O. It participates in siderophore biosynthesis. In terms of biological role, L-ornithine N(5)-monooxygenase; part of the siderophore basidioferrin biosynthetic pathway. The biosynthesis of basidioferrin depends on the hydroxylation of ornithine to N(5)-hydroxyornithine, catalyzed by the monooxygenase SMO1. The second step, the acylation of N(5)-hydroxy-L-ornithine is catalyzed by a not yet identified N-acyltransferase. Finally, assembly of basidioferrin is catalyzed by the nonribosomal peptide synthase (NRPS) NPS2 via amide bond formation between three L-AHO molecules to release the linear L-AHO trimer. This Ceriporiopsis subvermispora (strain B) (White-rot fungus) protein is L-ornithine N(5)-monooxygenase (SMO1).